A 252-amino-acid polypeptide reads, in one-letter code: Floral homeotic protein AGAMOUS (252 aa).

The disordered stretch occupies residues 1-20; it reads MAYQSELGGDSSPLRKSGRG. The region spanning 19-73 is the MADS-box domain; it reads RGKIEIKRIENTTNRQVTFCKRRNGLLKKAYELSVLCDAEVALIVFSSRGRLYEY. The stretch at 99 to 166 forms a coiled coil; sequence AEINAQYYQQ…KKNELLFSEI (68 aa). The 91-residue stretch at 103-193 folds into the K-box domain; it reads AQYYQQESAK…RAKIAENERN (91 aa).

In terms of assembly, homodimer, capable of binding to CArG-box sequences. Forms a heterodimer via the K-box domain with either SEPALATTA1/AGL2, SEPALATTA2/AGL4, SEPALLATA3/AGL9 or AGL6. Heterodimerization also seen with some other Agamous-like MADS-box proteins. Interacts with AGL15 and AGL16. Component of a complex made of FLOR1, VSP1 and AGAMOUS (AG). Binds directly with FLR1. As to expression, detected early in the floral meristem but mostly expressed in stamen and carpel primordia.

It is found in the nucleus. Its function is as follows. Probable transcription factor involved in the control of organ identity during the early development of flowers. Is required for normal development of stamens and carpels in the wild-type flower. Plays a role in maintaining the determinacy of the floral meristem. Acts as C class cadastral protein by repressing the A class floral homeotic genes like APETALA1. Forms a heterodimer via the K-box domain with either SEPALATTA1/AGL2, SEPALATTA2/AGL4, SEPALLATA3/AGL9 or AGL6 that could be involved in genes regulation during floral meristem development. Controls AHL21/GIK, a multifunctional chromatin modifier in reproductive organ patterning and differentiation. Induces microsporogenesis through the activation of SPL/NZZ. The chain is Floral homeotic protein AGAMOUS (AG) from Arabidopsis thaliana (Mouse-ear cress).